The sequence spans 226 residues: MPQAALRLDKVTRSFSQGREVLNVLTGADLAVNPGEIVALVGPSGAGKSTLLQICGLLEKPTAGEVRIGGISCGQLSEDRRTLLRRDHLGFVYQYHHLLPEFSAAENIVVPQMIAGIGRKPALARAAELLAKMGLSERQDHRPGQLSGGEQQRVAICRALANRPKLLLADEPTGNLDPNTAERVFQALLDLVRGEGLAALIATHNPDLARRMDRIVTLREGKVVAA.

The ABC transporter domain occupies Leu6–Ala226. An ATP-binding site is contributed by Gly42–Ser49.

The protein belongs to the ABC transporter superfamily. Lipoprotein translocase (TC 3.A.1.125) family. The complex is composed of two ATP-binding proteins (LolD) and two transmembrane proteins (LolC and LolE).

Its subcellular location is the cell inner membrane. In terms of biological role, part of the ABC transporter complex LolCDE involved in the translocation of mature outer membrane-directed lipoproteins, from the inner membrane to the periplasmic chaperone, LolA. Responsible for the formation of the LolA-lipoprotein complex in an ATP-dependent manner. This Rhodospirillum rubrum (strain ATCC 11170 / ATH 1.1.1 / DSM 467 / LMG 4362 / NCIMB 8255 / S1) protein is Lipoprotein-releasing system ATP-binding protein LolD 1.